A 208-amino-acid polypeptide reads, in one-letter code: Large ribosomal subunit protein bL25 (208 aa).

A compositionally biased stretch (acidic residues) spans D185 to G195. The disordered stretch occupies residues D185–S208. The span at E196–S208 shows a compositional bias: low complexity.

The protein belongs to the bacterial ribosomal protein bL25 family. CTC subfamily. In terms of assembly, part of the 50S ribosomal subunit; part of the 5S rRNA/L5/L18/L25 subcomplex. Contacts the 5S rRNA. Binds to the 5S rRNA independently of L5 and L18.

Functionally, this is one of the proteins that binds to the 5S RNA in the ribosome where it forms part of the central protuberance. The protein is Large ribosomal subunit protein bL25 of Rhodococcus opacus (strain B4).